Here is a 290-residue protein sequence, read N- to C-terminus: PIH1 domain-containing protein 1 (290 aa).

Residues serine 12 and serine 173 each carry the phosphoserine modification.

This sequence belongs to the PIH1 family. As to quaternary structure, component of the R2TP complex composed at least of RUVBL1, RUVBL2, RPAP3 and PIHD1. Component of the PAQosome complex which is responsible for the biogenesis of several protein complexes and which consists of R2TP complex members RUVBL1, RUVBL2, RPAP3 and PIH1D1, URI complex members PFDN2, PFDN6, PDRG1, UXT and URI1 as well as ASDURF, POLR2E and DNAAF10/WDR92. Interacts with phosphorylated TELO2 and mediates interaction of TELO2 with the R2TP complex. Interacts with phosphorylated ECD, EFTUD2/SNRP116, RPB1 and UBR5 and with RPB1 in a phosphorylation-independent manner. Interacts with the core C/D box snoRNP particle components NOP58 and FBL and with RUVBL1/TIP49. Interacts with RPAP3 and DNAAF10. Interacts with histone H4 and with SWI/SNF complex member SMARCB1/SNF5. Interacts with the mTORC1 complex member RPTOR. Interacts with MSL1. In terms of tissue distribution, expressed at low levels in normal mammary epithelial cells (at protein level). Highest expression in lung, leukocyte and placenta. Expressed at lower levels in brain, prostate, colon, heart, small intestine, liver, ovary, pancreas, skeletal muscle, spleen, testis and thymus.

The protein resides in the nucleus. Functionally, involved in the assembly of C/D box small nucleolar ribonucleoprotein (snoRNP) particles. Recruits the SWI/SNF complex to the core promoter of rRNA genes and enhances pre-rRNA transcription. Mediates interaction of TELO2 with the R2TP complex which is necessary for the stability of MTOR and SMG1. Positively regulates the assembly and activity of the mTORC1 complex. The sequence is that of PIH1 domain-containing protein 1 (PIH1D1) from Homo sapiens (Human).